Here is a 316-residue protein sequence, read N- to C-terminus: tRNA dimethylallyltransferase (316 aa).

Residue 17-24 (GPTASGKT) participates in ATP binding. 19–24 (TASGKT) lines the substrate pocket. Interaction with substrate tRNA stretches follow at residues 42-45 (DSAL), 166-170 (QRLSR), and 247-252 (RCVGYR).

The protein belongs to the IPP transferase family. Monomer. It depends on Mg(2+) as a cofactor.

The enzyme catalyses adenosine(37) in tRNA + dimethylallyl diphosphate = N(6)-dimethylallyladenosine(37) in tRNA + diphosphate. Its function is as follows. Catalyzes the transfer of a dimethylallyl group onto the adenine at position 37 in tRNAs that read codons beginning with uridine, leading to the formation of N6-(dimethylallyl)adenosine (i(6)A). The sequence is that of tRNA dimethylallyltransferase from Salmonella schwarzengrund (strain CVM19633).